We begin with the raw amino-acid sequence, 158 residues long: Ribonuclease HI (158 aa).

An RNase H type-1 domain is found at 3–144 (ELKLIHIFTD…CDQLARAAAE (142 aa)). Mg(2+) contacts are provided by Asp-12, Glu-50, Asp-72, and Asp-136.

This sequence belongs to the RNase H family. In terms of assembly, monomer. It depends on Mg(2+) as a cofactor.

The protein resides in the cytoplasm. It catalyses the reaction Endonucleolytic cleavage to 5'-phosphomonoester.. Functionally, endonuclease that specifically degrades the RNA of RNA-DNA hybrids. In Shewanella oneidensis (strain ATCC 700550 / JCM 31522 / CIP 106686 / LMG 19005 / NCIMB 14063 / MR-1), this protein is Ribonuclease HI.